A 444-amino-acid chain; its full sequence is MFIKRCSRSIFLQVVIGLVIGVLCGVGIPDLAVQMKPLGDGFIKLIKMLIALIVFCVVVNGISGAGDLKKVGRIGLKSVIYFEILTTIALVLGLVVAYSLGLGSGANIHLNELPAGDIALYTGRTQEIHGPVAFLMGLIPTSVFSAFAENDILQVLLFSVLFGSALNLVGEQASGVARLINEFSHIVFRIMGMIVRLAPLGVFGAVAFTTARYGVDSLSHLGALVLVFYATCLVFVMAVLGSVLRLSGVRMLPFLRYFREELLIVMGTASSDAVLPQVMRKLEHMGIRSSTVGLVIPTGYSFNLDGFSIYLTLAVVFIAHVTGTPLAMTDLLTILLVSLVTSKGAHGIPGSALVILAATLTAVPAIPVAGLVLVLSVDWFMGIGRALTNLIGNCVATVTIARWENDIDLPRAQAILDGRLEAPTRTGGEPLERGVVAGEGKLQG.

Transmembrane regions (helical) follow at residues 9–29, 42–62, 78–98, 152–172, 190–210, 221–241, 307–327, 354–374, and 380–400; these read SIFL…VGIP, FIKL…VNGI, SVIY…VVAY, ILQV…VGEQ, IMGM…AFTT, LGAL…AVLG, FSIY…TPLA, VILA…LVLV, and FMGI…TVTI.

The protein belongs to the dicarboxylate/amino acid:cation symporter (DAACS) (TC 2.A.23) family.

The protein localises to the cell inner membrane. Responsible for the transport of dicarboxylates such as succinate, fumarate, and malate from the periplasm across the membrane. The protein is C4-dicarboxylate transport protein 1 of Pseudomonas paraeruginosa (strain DSM 24068 / PA7) (Pseudomonas aeruginosa (strain PA7)).